Here is a 289-residue protein sequence, read N- to C-terminus: Acetyl-coenzyme A carboxylase carboxyl transferase subunit beta (289 aa).

A CoA carboxyltransferase N-terminal domain is found at 28-289 (VMTKCPKCKK…QGGEMAVWQS (262 aa)). Cys-32, Cys-35, Cys-51, and Cys-54 together coordinate Zn(2+). The C4-type zinc-finger motif lies at 32 to 54 (CPKCKKIMYTKEVLKNLKVCVNC).

This sequence belongs to the AccD/PCCB family. As to quaternary structure, acetyl-CoA carboxylase is a heterohexamer composed of biotin carboxyl carrier protein (AccB), biotin carboxylase (AccC) and two subunits each of ACCase subunit alpha (AccA) and ACCase subunit beta (AccD). Zn(2+) serves as cofactor.

The protein localises to the cytoplasm. It carries out the reaction N(6)-carboxybiotinyl-L-lysyl-[protein] + acetyl-CoA = N(6)-biotinyl-L-lysyl-[protein] + malonyl-CoA. It functions in the pathway lipid metabolism; malonyl-CoA biosynthesis; malonyl-CoA from acetyl-CoA: step 1/1. Component of the acetyl coenzyme A carboxylase (ACC) complex. Biotin carboxylase (BC) catalyzes the carboxylation of biotin on its carrier protein (BCCP) and then the CO(2) group is transferred by the transcarboxylase to acetyl-CoA to form malonyl-CoA. This is Acetyl-coenzyme A carboxylase carboxyl transferase subunit beta from Bacillus cereus (strain ZK / E33L).